Reading from the N-terminus, the 167-residue chain is I-Kappa-B like protein I1 (167 aa).

ANK repeat units lie at residues 54 to 86 (HGKQCVHIVSNPGIADPQEKLKLLMEWGADING), 91 to 121 (FGNTPLHIAAYTQNHKLATWLCNQPGINMGI), and 125 to 154 (LFKTPYYVACERHDIKIMNILRAKGGQCRI).

This sequence belongs to the polydnaviridae I-Kappa-B-like protein family.

Suppresses the host immune response through NF-kappa-B inactivation. Possesses ankyrin repeat domains required for NF-kappa-B binding but lacks the regulatory regions required for dissociation from NF-kappa-B and degradation. Therefore, prevents host NF-kappa-B release and subsequent activation. The protein is I-Kappa-B like protein I1 (I1) of Microplitis demolitor (Parasitoid wasp).